The following is a 200-amino-acid chain: NAD(P)H dehydrogenase (quinone) (200 aa).

In terms of domain architecture, Flavodoxin-like spans 4-191 (ILVLYHSLWG…TIARFQGRHV (188 aa)). FMN contacts are provided by residues 10–15 (SLWGHV) and 79–81 (TRF). Tryptophan 12 is a binding site for NAD(+). Residue tryptophan 99 coordinates substrate. Residues 114–120 (STATQHG) and histidine 135 each bind FMN.

The protein belongs to the WrbA family. FMN is required as a cofactor.

The enzyme catalyses a quinone + NADH + H(+) = a quinol + NAD(+). The catalysed reaction is a quinone + NADPH + H(+) = a quinol + NADP(+). This chain is NAD(P)H dehydrogenase (quinone), found in Acidithiobacillus ferrooxidans (strain ATCC 53993 / BNL-5-31) (Leptospirillum ferrooxidans (ATCC 53993)).